An 84-amino-acid chain; its full sequence is Cytochrome b559 subunit alpha (84 aa).

The chain crosses the membrane as a helical span at residues 22 to 36 (IIHSITIPSLFVAGF). His-24 is a heme binding site.

The protein belongs to the PsbE/PsbF family. As to quaternary structure, heterodimer of an alpha subunit and a beta subunit. PSII is composed of 1 copy each of membrane proteins PsbA, PsbB, PsbC, PsbD, PsbE, PsbF, PsbH, PsbI, PsbJ, PsbK, PsbL, PsbM, PsbT, PsbX, PsbY, PsbZ, Psb30/Ycf12, at least 3 peripheral proteins of the oxygen-evolving complex and a large number of cofactors. It forms dimeric complexes. Requires heme b as cofactor.

Its subcellular location is the plastid. The protein resides in the chloroplast thylakoid membrane. In terms of biological role, this b-type cytochrome is tightly associated with the reaction center of photosystem II (PSII). PSII is a light-driven water:plastoquinone oxidoreductase that uses light energy to abstract electrons from H(2)O, generating O(2) and a proton gradient subsequently used for ATP formation. It consists of a core antenna complex that captures photons, and an electron transfer chain that converts photonic excitation into a charge separation. The chain is Cytochrome b559 subunit alpha from Emiliania huxleyi (Coccolithophore).